The following is a 488-amino-acid chain: Glutamate--tRNA ligase (488 aa).

The short motif at 12–22 (PSPTGYMHVGN) is the 'HIGH' region element. Residues Cys-109, Cys-111, Cys-136, and His-138 each coordinate Zn(2+). Residues 253–257 (KLSKR) carry the 'KMSKS' region motif. Residue Lys-256 participates in ATP binding.

This sequence belongs to the class-I aminoacyl-tRNA synthetase family. Glutamate--tRNA ligase type 1 subfamily. Monomer. It depends on Zn(2+) as a cofactor.

The protein resides in the cytoplasm. It catalyses the reaction tRNA(Glu) + L-glutamate + ATP = L-glutamyl-tRNA(Glu) + AMP + diphosphate. Functionally, catalyzes the attachment of glutamate to tRNA(Glu) in a two-step reaction: glutamate is first activated by ATP to form Glu-AMP and then transferred to the acceptor end of tRNA(Glu). In Clostridium tetani (strain Massachusetts / E88), this protein is Glutamate--tRNA ligase.